The following is a 118-amino-acid chain: Ribonuclease P protein component 4 (118 aa).

Zn(2+)-binding residues include cysteine 59, cysteine 62, cysteine 85, and cysteine 88.

This sequence belongs to the eukaryotic/archaeal RNase P protein component 4 family. In terms of assembly, consists of a catalytic RNA component and at least 4-5 protein subunits. The cofactor is Zn(2+).

The protein resides in the cytoplasm. The enzyme catalyses Endonucleolytic cleavage of RNA, removing 5'-extranucleotides from tRNA precursor.. In terms of biological role, part of ribonuclease P, a protein complex that generates mature tRNA molecules by cleaving their 5'-ends. This is Ribonuclease P protein component 4 from Sulfolobus acidocaldarius (strain ATCC 33909 / DSM 639 / JCM 8929 / NBRC 15157 / NCIMB 11770).